The primary structure comprises 113 residues: Flagellar transcriptional regulator FlhD (113 aa).

This sequence belongs to the FlhD family. As to quaternary structure, homodimer; disulfide-linked. Forms a heterohexamer composed of two FlhC and four FlhD subunits. Each FlhC binds a FlhD dimer, forming a heterotrimer, and a hexamer assembles by dimerization of two heterotrimers.

It is found in the cytoplasm. Its function is as follows. Functions in complex with FlhC as a master transcriptional regulator that regulates transcription of several flagellar and non-flagellar operons by binding to their promoter region. Activates expression of class 2 flagellar genes, including fliA, which is a flagellum-specific sigma factor that turns on the class 3 genes. Also regulates genes whose products function in a variety of physiological pathways. The polypeptide is Flagellar transcriptional regulator FlhD (Salmonella typhi).